Here is a 144-residue protein sequence, read N- to C-terminus: Catabolic 3-dehydroquinase (144 aa).

Y24 functions as the Proton acceptor in the catalytic mechanism. Substrate contacts are provided by N76, H82, and D89. The active-site Proton donor is the H102. Residues 103–104 (IT) and R113 contribute to the substrate site.

Belongs to the type-II 3-dehydroquinase family. As to quaternary structure, homododecamer. Adopts a ring-like structure, composed of an arrangement of two hexameric rings stacked on top of one another.

It carries out the reaction 3-dehydroquinate = 3-dehydroshikimate + H2O. The protein operates within aromatic compound metabolism; 3,4-dihydroxybenzoate biosynthesis; 3,4-dihydroxybenzoate from 3-dehydroquinate: step 1/2. Is involved in the catabolism of quinate. Allows the utilization of quinate as carbon source via the beta-ketoadipate pathway. The protein is Catabolic 3-dehydroquinase of Debaryomyces hansenii (strain ATCC 36239 / CBS 767 / BCRC 21394 / JCM 1990 / NBRC 0083 / IGC 2968) (Yeast).